A 400-amino-acid polypeptide reads, in one-letter code: Enoyl-[acyl-carrier-protein] reductase [NADH] 1 (400 aa).

Residues 48 to 53, 74 to 75, 111 to 112, and 139 to 140 contribute to the NAD(+) site; these read GSSSGY, FE, DA, and LA. Tyrosine 225 lines the substrate pocket. Tyrosine 235 acts as the Proton donor in catalysis. NAD(+) contacts are provided by residues lysine 244 and 273-275; that span reads VVT.

It belongs to the TER reductase family. In terms of assembly, monomer.

The catalysed reaction is a 2,3-saturated acyl-[ACP] + NAD(+) = a (2E)-enoyl-[ACP] + NADH + H(+). It functions in the pathway lipid metabolism; fatty acid biosynthesis. In terms of biological role, involved in the final reduction of the elongation cycle of fatty acid synthesis (FAS II). Catalyzes the reduction of a carbon-carbon double bond in an enoyl moiety that is covalently linked to an acyl carrier protein (ACP). The sequence is that of Enoyl-[acyl-carrier-protein] reductase [NADH] 1 from Photobacterium profundum (strain SS9).